The chain runs to 569 residues: Isochorismate synthase 1, chloroplastic (569 aa).

The N-terminal 45 residues, 1-45 (MASLQFSSQFLGSNTKTHSSIISISRSYSPTPFTRFSRKKYESCS), are a transit peptide targeting the chloroplast.

The protein belongs to the isochorismate synthase family. Monomer. Requires Mg(2+) as cofactor. In terms of tissue distribution, leaves.

The protein localises to the plastid. The protein resides in the chloroplast. It catalyses the reaction chorismate = isochorismate. Its pathway is siderophore biosynthesis; salicylate biosynthesis. Functionally, isochorismate synthase involved in the synthesis of salicylic acid (SA) required for both local and systemic acquired resistance (LAR and SAR) while SA synthesized through the phenylalanine ammonium lyase (PAL) pathway seems to potentiate plant cell death. Also involved in phylloquinone (vitamin K1) synthesis. Has no isochorismate pyruvate lyase (IPL) activity. The polypeptide is Isochorismate synthase 1, chloroplastic (ICS1) (Arabidopsis thaliana (Mouse-ear cress)).